Here is a 360-residue protein sequence, read N- to C-terminus: Magnesium transporter NIPA2 (360 aa).

Over 1–9 (MSQGHGKYD) the chain is Extracellular. The chain crosses the membrane as a helical span at residues 10–30 (FYIGLGLAMSSSIFIGGSFIL). Topologically, residues 31 to 56 (KKKGLLRLARKGSTRAGQGGHAYLKE) are cytoplasmic. Residues 57–77 (WLWWAGLLSMGAGEVANFAAY) traverse the membrane as a helical segment. A topological domain (extracellular) is located at residue Ala78. The chain crosses the membrane as a helical span at residues 79–99 (FAPATLVTPLGALSVLVSAIL). Residues 100-107 (SSYFLNER) are Cytoplasmic-facing. The helical transmembrane segment at 108–128 (LNLHGKIGCLLSILGSTVMVI) threads the bilayer. Residues 129-149 (HAPKEEEIETLNEMSHKLGDP) lie on the Extracellular side of the membrane. A helical transmembrane segment spans residues 150–170 (GFVVFATLVVIVSLILIFVVG). The Cytoplasmic portion of the chain corresponds to 171–175 (PRHGQ). The helical transmembrane segment at 176-196 (TNILVYITICSVIGAVSVSCA) threads the bilayer. Over 197 to 215 (KGLGIAIKELFAGKPVLQH) the chain is Extracellular. A helical transmembrane segment spans residues 216 to 236 (PLTWILLLSLIVCVSTQINYL). Over 237 to 246 (NRALDIFNTS) the chain is Cytoplasmic. Residues 247–267 (IVTPIYYVFFTTSVITCSAIL) traverse the membrane as a helical segment. The Extracellular portion of the chain corresponds to 268–278 (FKEWQDMPVDD). Residues 279 to 299 (VIGTLSGFFTIIVGIFLLHAF) form a helical membrane-spanning segment. Topologically, residues 300 to 360 (KDVSFSLSSL…SRRNGNLTAF (61 aa)) are cytoplasmic.

It belongs to the NIPA family.

Its subcellular location is the cell membrane. The protein resides in the early endosome. The catalysed reaction is Mg(2+)(in) = Mg(2+)(out). Acts as a selective Mg(2+) transporter. This chain is Magnesium transporter NIPA2 (NIPA2), found in Bos taurus (Bovine).